Here is a 28-residue protein sequence, read N- to C-terminus: U15-ctenitoxin-Co1a (28 aa).

2 cysteine pairs are disulfide-bonded: Cys3–Cys17 and Cys10–Cys22.

As to expression, expressed by the venom gland.

The protein localises to the secreted. Its function is as follows. Insecticidal neurotoxin that reversibly inhibits the N-methyl-D-aspartate (NMDA)-subtype of ionotropic glutamate receptor (GRIN) and inhibits inactivation of insect sodium channels (Nav). In vivo, is highly toxic to insects. This is U15-ctenitoxin-Co1a from Ctenus ornatus (Brazilian spider).